Reading from the N-terminus, the 245-residue chain is MIIPAIDLIDGKVVRLYQGDYGQQTTFDLSPLAQLQSYQAQDASWLHIVDLTGAKDPAKRQTALIAALTAGLSANIQVGGGIRTEEQVAELLSLGVKRVVIGSLAVKEPELVKGWFNKFGNEAICLALDINITPSGEKIVAVSGWQNGGGKNLESIVEDFSQVGLKHALVTDISRDGTLTGANTELYCELSSRYPNIAWQASGGIASLEDVAAVRDSGAAGIIIGKALLINQFNVAEAIQCWPNE.

Aspartate 7 (proton acceptor) is an active-site residue. The Proton donor role is filled by aspartate 129.

Belongs to the HisA/HisF family.

It localises to the cytoplasm. The catalysed reaction is 1-(5-phospho-beta-D-ribosyl)-5-[(5-phospho-beta-D-ribosylamino)methylideneamino]imidazole-4-carboxamide = 5-[(5-phospho-1-deoxy-D-ribulos-1-ylimino)methylamino]-1-(5-phospho-beta-D-ribosyl)imidazole-4-carboxamide. It functions in the pathway amino-acid biosynthesis; L-histidine biosynthesis; L-histidine from 5-phospho-alpha-D-ribose 1-diphosphate: step 4/9. The sequence is that of 1-(5-phosphoribosyl)-5-[(5-phosphoribosylamino)methylideneamino] imidazole-4-carboxamide isomerase from Shewanella oneidensis (strain ATCC 700550 / JCM 31522 / CIP 106686 / LMG 19005 / NCIMB 14063 / MR-1).